A 505-amino-acid polypeptide reads, in one-letter code: Glutamate--tRNA ligase (505 aa).

Positions proline 12 to threonine 22 match the 'HIGH' region motif. The short motif at lysine 253–arginine 257 is the 'KMSKS' region element. Residue lysine 256 participates in ATP binding.

This sequence belongs to the class-I aminoacyl-tRNA synthetase family. Glutamate--tRNA ligase type 1 subfamily. Monomer.

Its subcellular location is the cytoplasm. It catalyses the reaction tRNA(Glu) + L-glutamate + ATP = L-glutamyl-tRNA(Glu) + AMP + diphosphate. Its function is as follows. Catalyzes the attachment of glutamate to tRNA(Glu) in a two-step reaction: glutamate is first activated by ATP to form Glu-AMP and then transferred to the acceptor end of tRNA(Glu). This Chlamydia felis (strain Fe/C-56) (Chlamydophila felis) protein is Glutamate--tRNA ligase.